We begin with the raw amino-acid sequence, 86 residues long: Protein Tat (86 aa).

Residues M1–N24 form an interaction with human CREBBP region. A transactivation region spans residues M1 to G48. Zn(2+)-binding residues include C22, C25, and C27. Residues C22 to C37 form a cysteine-rich region. K28 carries the post-translational modification N6-acetyllysine; by host PCAF. C30, H33, C34, and C37 together coordinate Zn(2+). A core region spans residues F38–G48. Over residues G48–H59 the composition is skewed to basic residues. The segment at G48–E86 is disordered. A Nuclear localization signal, RNA-binding (TAR), and protein transduction motif is present at residues R49–R57. Positions R49–E86 are interaction with the host capping enzyme RNGTT. An N6-acetyllysine; by host EP300 and GCN5L2 mark is found at K50 and K51. 2 positions are modified to asymmetric dimethylarginine; by host PRMT6: R52 and R53. The segment covering Q60–P77 has biased composition (polar residues). K71 is covalently cross-linked (Glycyl lysine isopeptide (Lys-Gly) (interchain with G-Cter in ubiquitin)). Residues R78–D80 carry the Cell attachment site motif.

Belongs to the lentiviruses Tat family. In terms of assembly, interacts with host CCNT1. Associates with the P-TEFb complex composed at least of Tat, P-TEFb (CDK9 and CCNT1), TAR RNA, RNA Pol II. Recruits the HATs CREBBP, TAF1/TFIID, EP300, PCAF and GCN5L2. Interacts with host KAT5/Tip60; this interaction targets the latter to degradation. Interacts with the host deacetylase SIRT1. Interacts with host capping enzyme RNGTT; this interaction stimulates RNGTT. Binds to host KDR, and to the host integrins ITGAV/ITGB3 and ITGA5/ITGB1. Interacts with host KPNB1/importin beta-1 without previous binding to KPNA1/importin alpha-1. Interacts with EIF2AK2. Interacts with host nucleosome assembly protein NAP1L1; this interaction may be required for the transport of Tat within the nucleus, since the two proteins interact at the nuclear rim. Interacts with host C1QBP/SF2P32; this interaction involves lysine-acetylated Tat. Interacts with the host chemokine receptors CCR2, CCR3 and CXCR4. Interacts with host DPP4/CD26; this interaction may trigger an anti-proliferative effect. Interacts with host LDLR. Interacts with the host extracellular matrix metalloproteinase MMP1. Interacts with host PRMT6; this interaction mediates Tat's methylation. Interacts with, and is ubiquitinated by MDM2/Hdm2. Interacts with host PSMC3 and HTATIP2. Interacts with STAB1; this interaction may overcome SATB1-mediated repression of IL2 and IL2RA (interleukin) in T cells by binding to the same domain than HDAC1. Interacts (when acetylated) with human CDK13, thereby increasing HIV-1 mRNA splicing and promoting the production of the doubly spliced HIV-1 protein Nef. Interacts with host TBP; this interaction modulates the activity of transcriptional pre-initiation complex. Interacts with host RELA. Interacts with host PLSCR1; this interaction negatively regulates Tat transactivation activity by altering its subcellular distribution. Post-translationally, asymmetrical arginine methylation by host PRMT6 seems to diminish the transactivation capacity of Tat and affects the interaction with host CCNT1. In terms of processing, acetylation by EP300, CREBBP, GCN5L2/GCN5 and PCAF regulates the transactivation activity of Tat. EP300-mediated acetylation of Lys-50 promotes dissociation of Tat from the TAR RNA through the competitive binding to PCAF's bromodomain. In addition, the non-acetylated Tat's N-terminus can also interact with PCAF. PCAF-mediated acetylation of Lys-28 enhances Tat's binding to CCNT1. Lys-50 is deacetylated by SIRT1. Polyubiquitination by host MDM2 does not target Tat to degradation, but activates its transactivation function and fosters interaction with CCNT1 and TAR RNA. Post-translationally, phosphorylated by EIF2AK2 on serine and threonine residues adjacent to the basic region important for TAR RNA binding and function. Phosphorylation of Tat by EIF2AK2 is dependent on the prior activation of EIF2AK2 by dsRNA.

The protein localises to the host nucleus. The protein resides in the host nucleolus. It localises to the host cytoplasm. Its subcellular location is the secreted. Transcriptional activator that increases RNA Pol II processivity, thereby increasing the level of full-length viral transcripts. Recognizes a hairpin structure at the 5'-LTR of the nascent viral mRNAs referred to as the transactivation responsive RNA element (TAR) and recruits the cyclin T1-CDK9 complex (P-TEFb complex) that will in turn hyperphosphorylate the RNA polymerase II to allow efficient elongation. The CDK9 component of P-TEFb and other Tat-activated kinases hyperphosphorylate the C-terminus of RNA Pol II that becomes stabilized and much more processive. Other factors such as HTATSF1/Tat-SF1, SUPT5H/SPT5, and HTATIP2 are also important for Tat's function. Besides its effect on RNA Pol II processivity, Tat induces chromatin remodeling of proviral genes by recruiting the histone acetyltransferases (HATs) CREBBP, EP300 and PCAF to the chromatin. This also contributes to the increase in proviral transcription rate, especially when the provirus integrates in transcriptionally silent region of the host genome. To ensure maximal activation of the LTR, Tat mediates nuclear translocation of NF-kappa-B by interacting with host RELA. Through its interaction with host TBP, Tat may also modulate transcription initiation. Tat can reactivate a latently infected cell by penetrating in it and transactivating its LTR promoter. In the cytoplasm, Tat is thought to act as a translational activator of HIV-1 mRNAs. In terms of biological role, extracellular circulating Tat can be endocytosed by surrounding uninfected cells via the binding to several surface receptors such as CD26, CXCR4, heparan sulfate proteoglycans (HSPG) or LDLR. Neurons are rarely infected, but they internalize Tat via their LDLR. Through its interaction with nuclear HATs, Tat is potentially able to control the acetylation-dependent cellular gene expression. Modulates the expression of many cellular genes involved in cell survival, proliferation or in coding for cytokines or cytokine receptors. Tat plays a role in T-cell and neurons apoptosis. Tat induced neurotoxicity and apoptosis probably contribute to neuroAIDS. Circulating Tat also acts as a chemokine-like and/or growth factor-like molecule that binds to specific receptors on the surface of the cells, affecting many cellular pathways. In the vascular system, Tat binds to ITGAV/ITGB3 and ITGA5/ITGB1 integrins dimers at the surface of endothelial cells and competes with bFGF for heparin-binding sites, leading to an excess of soluble bFGF. This chain is Protein Tat, found in Homo sapiens (Human).